The sequence spans 77 residues: Large ribosomal subunit protein bL28 (77 aa).

It belongs to the bacterial ribosomal protein bL28 family.

In Polaromonas sp. (strain JS666 / ATCC BAA-500), this protein is Large ribosomal subunit protein bL28.